Here is a 159-residue protein sequence, read N- to C-terminus: MGGLKKPKKKYLAGKPKKIWNKQLLLEELQLMGEYGLRNKKELWLARARLKWIVRRARALLSMTAEERAPLEVPFKEKLYKMGFIEDPNVPLDRILSLDVRAILERRLQTLVFRMGLAKSIHHARQLVVHGHVLVAGRRVTSPGFLVPRELEDKITIEQ.

An S4 RNA-binding domain is found at 106–158 (RRLQTLVFRMGLAKSIHHARQLVVHGHVLVAGRRVTSPGFLVPRELEDKITIE).

Belongs to the universal ribosomal protein uS4 family. Part of the 30S ribosomal subunit. Contacts protein S5. The interaction surface between S4 and S5 is involved in control of translational fidelity.

One of the primary rRNA binding proteins, it binds directly to 16S rRNA where it nucleates assembly of the body of the 30S subunit. Functionally, with S5 and S12 plays an important role in translational accuracy. This Pyrobaculum calidifontis (strain DSM 21063 / JCM 11548 / VA1) protein is Small ribosomal subunit protein uS4.